The sequence spans 580 residues: MNHKDWDLVNRRLVAKMLSELEYEQVFHAESQGDDRYCINLPGAQWRFIAERGIWGWLWIDAQTLRCADEPVLAQTLLMQLKQVLSMSDATVAEHMQDLYATLLGDLQLLKARRGLSASDLINLNADRLQCLLSGHPKFVFNKGRRGWGKEALERYAPEYANTFRLHWLAVKREHMIWRCDNEMDIHQLLTAAMDPQEFARFSQVWQENGLDHNWLPLPVHPWQWQEKIATDFIADFGEGRMVSLGEFGDQWLAQQSLRTLTNASRRGGLDIKLPLTIYNTSCYRGIPGRYIAAGPLASRWLQQVFATDATLVQSGAVILGEPAAGYVSHEGYAALARAPYRYQEMLGVIWRENPCRWLKPDESPFLMATLMEWDENNQPLAGAYIDRSGLDAETWLTQLFRVVVVPLYHLLCRYGVALIAHGQNITLAMKEGVPQRVLLKDFQGDMRLVKEEFPEMDSLPQEVRDVTSRLSADYLIHDLQTGHFVTVLRFISPLMVRLGVPERRFYQLLAAVLSDYMKKHPQMSERFALFSLFRPQIIRVVLNPVKLTWPDLDGGSRMLPNYLEDLQNPLWLVTQEYES.

It belongs to the IucA/IucC family.

It carries out the reaction N(2)-citryl-N(6)-acetyl-N(6)-hydroxy-L-lysine + N(6)-acetyl-N(6)-hydroxy-L-lysine + ATP = aerobactin + AMP + diphosphate + H(+). Its pathway is siderophore biosynthesis; aerobactin biosynthesis. Catalyzes the attachment of the second N-acetyl-N-hydroxylysine to the carboxylic group of N-citryl-N-acetyl-N-hydroxylysine to yield aerobactin. Involved in the biosynthesis of the siderophore aerobactin which is a chelator that mediates the high-affinity iron transport systems induced under iron-stressed conditions. The chain is Aerobactin synthase (iucC) from Escherichia coli.